We begin with the raw amino-acid sequence, 323 residues long: Lipoyl synthase (323 aa).

[4Fe-4S] cluster contacts are provided by cysteine 61, cysteine 66, cysteine 72, cysteine 87, cysteine 91, cysteine 94, and serine 300. A Radical SAM core domain is found at 73–289 (WDKKHATFMI…ETVAYTKGFL (217 aa)).

This sequence belongs to the radical SAM superfamily. Lipoyl synthase family. The cofactor is [4Fe-4S] cluster.

Its subcellular location is the cytoplasm. It catalyses the reaction [[Fe-S] cluster scaffold protein carrying a second [4Fe-4S](2+) cluster] + N(6)-octanoyl-L-lysyl-[protein] + 2 oxidized [2Fe-2S]-[ferredoxin] + 2 S-adenosyl-L-methionine + 4 H(+) = [[Fe-S] cluster scaffold protein] + N(6)-[(R)-dihydrolipoyl]-L-lysyl-[protein] + 4 Fe(3+) + 2 hydrogen sulfide + 2 5'-deoxyadenosine + 2 L-methionine + 2 reduced [2Fe-2S]-[ferredoxin]. It participates in protein modification; protein lipoylation via endogenous pathway; protein N(6)-(lipoyl)lysine from octanoyl-[acyl-carrier-protein]: step 2/2. Catalyzes the radical-mediated insertion of two sulfur atoms into the C-6 and C-8 positions of the octanoyl moiety bound to the lipoyl domains of lipoate-dependent enzymes, thereby converting the octanoylated domains into lipoylated derivatives. The sequence is that of Lipoyl synthase from Sinorhizobium medicae (strain WSM419) (Ensifer medicae).